We begin with the raw amino-acid sequence, 248 residues long: GTP cyclohydrolase 1 type 2 homolog (248 aa).

A divalent metal cation-binding residues include histidine 64, histidine 65, aspartate 101, histidine 216, and glutamate 220.

The protein belongs to the GTP cyclohydrolase I type 2/NIF3 family. In terms of assembly, homohexamer.

This is GTP cyclohydrolase 1 type 2 homolog from Borreliella burgdorferi (strain ATCC 35210 / DSM 4680 / CIP 102532 / B31) (Borrelia burgdorferi).